The primary structure comprises 404 residues: Cysteine desulfurase IscS (404 aa).

Pyridoxal 5'-phosphate-binding positions include 75–76, N155, Q183, and 203–205; these read AT and SAH. An N6-(pyridoxal phosphate)lysine modification is found at K206. T243 contacts pyridoxal 5'-phosphate. C328 serves as the catalytic Cysteine persulfide intermediate. C328 contributes to the [2Fe-2S] cluster binding site.

The protein belongs to the class-V pyridoxal-phosphate-dependent aminotransferase family. NifS/IscS subfamily. In terms of assembly, homodimer. Forms a heterotetramer with IscU, interacts with other sulfur acceptors. Requires pyridoxal 5'-phosphate as cofactor.

It localises to the cytoplasm. The catalysed reaction is (sulfur carrier)-H + L-cysteine = (sulfur carrier)-SH + L-alanine. Its pathway is cofactor biosynthesis; iron-sulfur cluster biosynthesis. Master enzyme that delivers sulfur to a number of partners involved in Fe-S cluster assembly, tRNA modification or cofactor biosynthesis. Catalyzes the removal of elemental sulfur atoms from cysteine to produce alanine. Functions as a sulfur delivery protein for Fe-S cluster synthesis onto IscU, an Fe-S scaffold assembly protein, as well as other S acceptor proteins. The protein is Cysteine desulfurase IscS of Vibrio cholerae serotype O1 (strain M66-2).